The primary structure comprises 256 residues: Ribonuclease HII (256 aa).

Positions 72-256 (QYIAGMDEVG…SFNPVPKYLN (185 aa)) constitute an RNase H type-2 domain. 3 residues coordinate a divalent metal cation: aspartate 78, glutamate 79, and aspartate 170.

It belongs to the RNase HII family. Mn(2+) is required as a cofactor. Mg(2+) serves as cofactor.

It localises to the cytoplasm. The enzyme catalyses Endonucleolytic cleavage to 5'-phosphomonoester.. Endonuclease that specifically degrades the RNA of RNA-DNA hybrids. This is Ribonuclease HII from Limosilactobacillus reuteri (strain DSM 20016) (Lactobacillus reuteri).